A 543-amino-acid chain; its full sequence is MTTDFTPWPEALAAQYRQLGYWQDKTLLDYLQQSAERTPNALALVGDNQQWRYQAMLERIEQLAAGFTELGLGCGDNVVLQLGNVAEFYLCFFALLRQGIRPILALPAHRLAEIRYFCQHSQAKAYLIDGAQRPFDYQALAQELLACCPTLQTVIVRGQTRVTDPKFIELASCYSASSCQANADPNQIAFFQLSGGTTGTPKLIPRTHNDYAYSVTASVEICRFDQHTRYLCVLPAAHNFPLSSPGALGVFWAGGCVVLSQDASPQHAFKLIEQHKITVTALVPPLALLWMDHAEKSTYDLSSLHFVQVGGAKFSEAAARRLPKALGCQLQQVFGMAEGLVNYTRLDDSAELIATTQGRPISAHDQLLVVDEQGQPVASGEEGYLLTQGPYTIRGYYRADQHNQRAFNAQGFYITGDKVKLSSEGYVIVTGRAKDQINRGGEKIAAEEVENQLLHHPAVHDAALIAISDEYLGERSCAVIVLKPEQSVNTIQLKRFLHQAGLADYKIPDQIQFIDQLPKTSVGKIDKNALRRRFDTLGLALMS.

A helical transmembrane segment spans residues 240 to 259 (FPLSSPGALGVFWAGGCVVL).

The protein belongs to the ATP-dependent AMP-binding enzyme family.

Its subcellular location is the cell inner membrane. The enzyme catalyses 2,3-dihydroxybenzoate + holo-[ACP] + ATP = 2,3-dihydroxybenzoyl-[ACP] + AMP + diphosphate. The protein operates within siderophore biosynthesis; vibriobactin biosynthesis. In terms of biological role, activation of the carboxylate group of 2,3-dihydroxy-benzoate (DHB), via ATP-dependent PPi exchange reactions, to the acyladenylate, preparing that molecule for the final stages of vibriobactin synthesis. In Vibrio cholerae serotype O1 (strain ATCC 39315 / El Tor Inaba N16961), this protein is Vibriobactin-specific 2,3-dihydroxybenzoate-AMP ligase (vibE).